A 194-amino-acid polypeptide reads, in one-letter code: Peptidyl-tRNA hydrolase (194 aa).

Position 16 (Y16) interacts with tRNA. H21 acts as the Proton acceptor in catalysis. 3 residues coordinate tRNA: F67, N69, and N115.

This sequence belongs to the PTH family. Monomer.

The protein resides in the cytoplasm. The catalysed reaction is an N-acyl-L-alpha-aminoacyl-tRNA + H2O = an N-acyl-L-amino acid + a tRNA + H(+). Hydrolyzes ribosome-free peptidyl-tRNAs (with 1 or more amino acids incorporated), which drop off the ribosome during protein synthesis, or as a result of ribosome stalling. Functionally, catalyzes the release of premature peptidyl moieties from peptidyl-tRNA molecules trapped in stalled 50S ribosomal subunits, and thus maintains levels of free tRNAs and 50S ribosomes. This Klebsiella pneumoniae (strain 342) protein is Peptidyl-tRNA hydrolase.